The sequence spans 173 residues: Crossover junction endodeoxyribonuclease RuvC (173 aa).

Residues Asp-8, Glu-67, and Asp-139 contribute to the active site. The Mg(2+) site is built by Asp-8, Glu-67, and Asp-139.

It belongs to the RuvC family. In terms of assembly, homodimer which binds Holliday junction (HJ) DNA. The HJ becomes 2-fold symmetrical on binding to RuvC with unstacked arms; it has a different conformation from HJ DNA in complex with RuvA. In the full resolvosome a probable DNA-RuvA(4)-RuvB(12)-RuvC(2) complex forms which resolves the HJ. Requires Mg(2+) as cofactor.

It localises to the cytoplasm. The enzyme catalyses Endonucleolytic cleavage at a junction such as a reciprocal single-stranded crossover between two homologous DNA duplexes (Holliday junction).. In terms of biological role, the RuvA-RuvB-RuvC complex processes Holliday junction (HJ) DNA during genetic recombination and DNA repair. Endonuclease that resolves HJ intermediates. Cleaves cruciform DNA by making single-stranded nicks across the HJ at symmetrical positions within the homologous arms, yielding a 5'-phosphate and a 3'-hydroxyl group; requires a central core of homology in the junction. The consensus cleavage sequence is 5'-(A/T)TT(C/G)-3'. Cleavage occurs on the 3'-side of the TT dinucleotide at the point of strand exchange. HJ branch migration catalyzed by RuvA-RuvB allows RuvC to scan DNA until it finds its consensus sequence, where it cleaves and resolves the cruciform DNA. This chain is Crossover junction endodeoxyribonuclease RuvC, found in Shewanella amazonensis (strain ATCC BAA-1098 / SB2B).